Consider the following 312-residue polypeptide: Olfactory receptor 2J2 (312 aa).

The Extracellular segment spans residues 1 to 26 (MMIKKNASSEDFFILLGFSNWPQLEV). Asn-6 carries N-linked (GlcNAc...) asparagine glycosylation. The helical transmembrane segment at 27 to 50 (VLFVVILIFYLMTLTGNLFIIILS) threads the bilayer. At 51 to 58 (YVDSHLHT) the chain is on the cytoplasmic side. The chain crosses the membrane as a helical span at residues 59-80 (PMYFFLSNLSFLDLCHTTSSIP). Over 81–101 (QLLVNLRGPEKTISYAGCMVQ) the chain is Extracellular. Cysteines 98 and 190 form a disulfide. A helical membrane pass occupies residues 102–121 (LYFVLALGIAECVLLVVMSY). Over 122-140 (DRYVAVCRPLHYTVLMHPR) the chain is Cytoplasmic. Residues 141-159 (FCHLLAAASWVIGFTISAL) traverse the membrane as a helical segment. Over 160–196 (HSSFTFWVPLCGHRLVDHFFCEVPALLRLSCVDTHAN) the chain is Extracellular. The helical transmembrane segment at 197 to 220 (ELTLMVMSSIFVLIPLILILTAYG) threads the bilayer. Residues 221 to 237 (AIARAVLSMQSTTGLQK) are Cytoplasmic-facing. The chain crosses the membrane as a helical span at residues 238–260 (VFRTCGAHLMVVSLFFIPVMCMY). At 261–273 (LQPPSENSPDQGK) the chain is on the extracellular side. Residues 274-293 (FIALFYTVVTPSLNPLIYTL) form a helical membrane-spanning segment. At 294–312 (RNKHVKGAAKRLLGWEWGK) the chain is on the cytoplasmic side.

This sequence belongs to the G-protein coupled receptor 1 family.

The protein localises to the cell membrane. Functionally, odorant receptor. The polypeptide is Olfactory receptor 2J2 (OR2J2) (Homo sapiens (Human)).